A 177-amino-acid chain; its full sequence is Adenine phosphoribosyltransferase (177 aa).

It belongs to the purine/pyrimidine phosphoribosyltransferase family. In terms of assembly, homodimer.

It is found in the cytoplasm. The catalysed reaction is AMP + diphosphate = 5-phospho-alpha-D-ribose 1-diphosphate + adenine. It participates in purine metabolism; AMP biosynthesis via salvage pathway; AMP from adenine: step 1/1. Its function is as follows. Catalyzes a salvage reaction resulting in the formation of AMP, that is energically less costly than de novo synthesis. This Acidothermus cellulolyticus (strain ATCC 43068 / DSM 8971 / 11B) protein is Adenine phosphoribosyltransferase.